The sequence spans 88 residues: Small ribosomal subunit protein uS19 (88 aa).

The protein belongs to the universal ribosomal protein uS19 family.

Protein S19 forms a complex with S13 that binds strongly to the 16S ribosomal RNA. This is Small ribosomal subunit protein uS19 (rpsS) from Chlamydia muridarum (strain MoPn / Nigg).